A 287-amino-acid chain; its full sequence is PAK4-inhibitor INKA1 (287 aa).

Disordered stretches follow at residues 22-59 (GRDT…LEED) and 138-157 (SRAP…KSTP). Over residues 35 to 50 (QPTSQTGPDVQPSHQL) the composition is skewed to polar residues. The span at 138-147 (SRAPVASVPP) shows a compositional bias: low complexity. Inka box stretches follow at residues 168–205 (EAED…ELPE) and 261–287 (PADV…VSYL).

The protein belongs to the INKA family. Interacts with PAK4.

Its subcellular location is the nucleus. It localises to the cytoplasm. Functionally, inhibitor of the serine/threonine-protein kinase PAK4. Acts by binding PAK4 in a substrate-like manner, inhibiting the protein kinase activity. In Homo sapiens (Human), this protein is PAK4-inhibitor INKA1.